The primary structure comprises 296 residues: 4-hydroxybenzoate octaprenyltransferase (296 aa).

Helical transmembrane passes span 28–48 (IGTL…SDGI), 51–71 (LAVL…GCVI), 102–122 (LLLT…LNHL), 143–163 (FFPI…PMAF), 174–194 (AWIL…VYAM), 212–232 (FGRY…LLMA), 233–253 (VLGA…IVLL), and 274–294 (FLAN…HTFF).

This sequence belongs to the UbiA prenyltransferase family. It depends on Mg(2+) as a cofactor.

It is found in the cell inner membrane. The enzyme catalyses all-trans-octaprenyl diphosphate + 4-hydroxybenzoate = 4-hydroxy-3-(all-trans-octaprenyl)benzoate + diphosphate. It participates in cofactor biosynthesis; ubiquinone biosynthesis. Catalyzes the prenylation of para-hydroxybenzoate (PHB) with an all-trans polyprenyl group. Mediates the second step in the final reaction sequence of ubiquinone-8 (UQ-8) biosynthesis, which is the condensation of the polyisoprenoid side chain with PHB, generating the first membrane-bound Q intermediate 3-octaprenyl-4-hydroxybenzoate. The chain is 4-hydroxybenzoate octaprenyltransferase from Neisseria meningitidis serogroup C (strain 053442).